Reading from the N-terminus, the 462-residue chain is 2-amino-5-chloromuconic acid deaminase (462 aa).

Catalysis depends on charge relay system residues Lys-79 and Ser-156. Ser-180 acts as the Acyl-ester intermediate in catalysis.

This sequence belongs to the amidase family.

The enzyme catalyses (2Z,4E)-2-aminomuconate + H2O = (3E)-2-oxohex-3-enedioate + NH4(+). Its pathway is xenobiotic degradation; nitrobenzene degradation. It participates in xenobiotic degradation; 4-chloronitrobenzene degradation. In terms of biological role, involved in the biodegradation of nitroaromatic and chlorinated nitroaromatic compounds. Catalyzes the conversion of 2-amino-5-chloromuconic acid into 2-hydroxy-5-chloromuconic acid and ammonia. Also able to catalyze the transformation of 2-aminomuconic acid into 2-hydroxymuconic acid. The protein is 2-amino-5-chloromuconic acid deaminase of Comamonas testosteroni (Pseudomonas testosteroni).